A 224-amino-acid chain; its full sequence is C-&gt;U-editing enzyme APOBEC-2 (224 aa).

The segment at 1-24 is disordered; it reads MAQKEEAAVATEAASQNGEDLENL. Residues Glu60 and His98 each coordinate Zn(2+). One can recognise a CMP/dCMP-type deaminase domain in the interval 64 to 169; sequence GRNKTFLCYV…PEIQAALKKL (106 aa). Glu100 acts as the Proton donor in catalysis. The Zn(2+) site is built by Cys128 and Cys131.

This sequence belongs to the cytidine and deoxycytidylate deaminase family. In terms of assembly, homotetramer. Zn(2+) is required as a cofactor. As to expression, expressed exclusively in heart and skeletal muscle.

It carries out the reaction cytidine(6666) in apoB mRNA + H2O + H(+) = uridine(6666) in apoB mRNA + NH4(+). Probable C to U editing enzyme whose physiological substrate is not yet known. Does not display detectable apoB mRNA editing. Has a low intrinsic cytidine deaminase activity. May play a role in the epigenetic regulation of gene expression through the process of active DNA demethylation. This is C-&gt;U-editing enzyme APOBEC-2 (APOBEC2) from Homo sapiens (Human).